A 957-amino-acid chain; its full sequence is UvrABC system protein A (957 aa).

33 to 40 is a binding site for ATP; that stretch reads GLSGSGKS. The C4-type zinc-finger motif lies at 252 to 279; that stretch reads CPQCGFSIPELEPRMFSFNSPFGACPTC. ABC transporter domains are found at residues 309-587 and 607-935; these read WEPI…AKSL and PNGR…KYLR. 639–646 serves as a coordination point for ATP; the sequence is GVSGSGKS. The C4-type zinc-finger motif lies at 738–764; sequence CEACRGDGIIKIEMHFLPDVYVPCEVC.

Belongs to the ABC transporter superfamily. UvrA family. In terms of assembly, forms a heterotetramer with UvrB during the search for lesions.

It localises to the cytoplasm. In terms of biological role, the UvrABC repair system catalyzes the recognition and processing of DNA lesions. UvrA is an ATPase and a DNA-binding protein. A damage recognition complex composed of 2 UvrA and 2 UvrB subunits scans DNA for abnormalities. When the presence of a lesion has been verified by UvrB, the UvrA molecules dissociate. The chain is UvrABC system protein A from Halalkalibacterium halodurans (strain ATCC BAA-125 / DSM 18197 / FERM 7344 / JCM 9153 / C-125) (Bacillus halodurans).